The following is a 128-amino-acid chain: Organic solute transporter subunit beta (128 aa).

The Extracellular segment spans residues 1–30 (MDHSAEKAAANAEVPQELLEEMLWYFRAED). A helical membrane pass occupies residues 31 to 53 (AAPWNYSILVLAVLVVMTSMFLL). Residues 54 to 128 (RRSILANRNR…FLPDPQETES (75 aa)) are Cytoplasmic-facing. Disordered regions lie at residues 61–80 (RNRK…HLDD) and 101–128 (PDLA…ETES). Composition is skewed to basic and acidic residues over residues 66 to 80 (QPQD…HLDD) and 101 to 115 (PDLA…EKDS). Serine 116 is subject to Phosphoserine.

Belongs to the OST-beta family. As to quaternary structure, interacts with SLC51A. The Ost-alpha/Ost-beta complex is a heterodimer composed of alpha (SLC51A) and beta (SLC51B) subunit; induces the transport of SLC51A from the endoplasmic reticulum to the plasma membrane. Present at high level in ileum. In ileum, it is restricted to the apical domain on the mature villus enterocytes with little detectable expression in the goblet cells or crypt enterocytes (at protein level). Expressed in kidney but not in heart, brain, liver, spleen, embryo, lung, thymus, ovary nor testis.

It localises to the cell membrane. The enzyme catalyses taurocholate(out) = taurocholate(in). It catalyses the reaction tauroursodeoxycholate(out) = tauroursodeoxycholate(in). The catalysed reaction is glycoursodeoxycholate(out) = glycoursodeoxycholate(in). It carries out the reaction glycocholate(out) = glycocholate(in). The enzyme catalyses taurochenodeoxycholate(out) = taurochenodeoxycholate(in). It catalyses the reaction glycochenodeoxycholate(out) = glycochenodeoxycholate(in). The catalysed reaction is taurodeoxycholate(out) = taurodeoxycholate(in). It carries out the reaction glycodeoxycholate(out) = glycodeoxycholate(in). The enzyme catalyses prostaglandin E2(out) = prostaglandin E2(in). It catalyses the reaction estrone 3-sulfate(out) = estrone 3-sulfate(in). The catalysed reaction is dehydroepiandrosterone 3-sulfate(out) = dehydroepiandrosterone 3-sulfate(in). Its function is as follows. Essential component of the Ost-alpha/Ost-beta complex, a heterodimer that acts as the intestinal basolateral transporter responsible for bile acid export from enterocytes into portal blood. The Ost-alpha/Ost-beta complex efficiently transports the major species of bile acids (taurocholate). Taurine conjugates are transported more efficiently across the basolateral membrane than glycine-conjugated bile acids. Can also transport steroids such as estrone 3-sulfate and dehydroepiandrosterone 3-sulfate, therefore playing a role in the enterohepatic circulation of sterols. Able to transport eicosanoids such as prostaglandin E2. Modulates SLC51A glycosylation, membrane trafficking and stability activities. The protein is Organic solute transporter subunit beta (Slc51b) of Mus musculus (Mouse).